The sequence spans 389 residues: Gibberellin 20 oxidase 2 (389 aa).

Positions 1-17 are enriched in pro residues; sequence MVAEHPTPPQPHQPPPM. A disordered region spans residues 1–23; the sequence is MVAEHPTPPQPHQPPPMDSTAGS. The Fe2OG dioxygenase domain occupies 224–324; the sequence is DSSSIMRCNY…RRSLAFFLCP (101 aa). Fe cation is bound by residues His249, Asp251, and His305. The active site involves Arg315.

This sequence belongs to the iron/ascorbate-dependent oxidoreductase family. GA20OX subfamily. Fe cation is required as a cofactor. L-ascorbate serves as cofactor.

It carries out the reaction gibberellin A12 + 2 2-oxoglutarate + 3 O2 + H(+) = gibberellin A9 + 2 succinate + 3 CO2 + 2 H2O. The catalysed reaction is gibberellin A53 + 2 2-oxoglutarate + 3 O2 + H(+) = gibberellin A20 + 2 succinate + 3 CO2 + 2 H2O. In terms of biological role, key oxidase enzyme in the biosynthesis of gibberellin that catalyzes the conversion of GA53 to GA20 via a three-step oxidation at C-20 of the GA skeleton. This Oryza sativa subsp. indica (Rice) protein is Gibberellin 20 oxidase 2 (20ox2).